The sequence spans 119 residues: Dolichyl-diphosphooligosaccharide--protein glycosyltransferase subunit DAD1 (119 aa).

Topologically, residues 1–35 (MGKASHSSTAQDAVALFDSLRSAYSATPTTLKIID) are cytoplasmic. A helical transmembrane segment spans residues 36–56 (LYIGFAVSTALIQVVYMAIVG). Over 57 to 59 (SFP) the chain is Lumenal. A helical membrane pass occupies residues 60–80 (FNSFLSGVLSCIGTAVLAVCL). At 81 to 98 (RIQVNKENKEFKDLAPER) the chain is on the cytoplasmic side. Residues 99–119 (AFADFVLCNLVLHMVIMNFLG) traverse the membrane as a helical segment.

This sequence belongs to the DAD/OST2 family. In terms of assembly, component of the oligosaccharyltransferase (OST) complex.

The protein resides in the endoplasmic reticulum membrane. The protein operates within protein modification; protein glycosylation. Functionally, subunit of the oligosaccharyl transferase (OST) complex that catalyzes the initial transfer of a defined glycan (Glc(3)Man(9)GlcNAc(2) in eukaryotes) from the lipid carrier dolichol-pyrophosphate to an asparagine residue within an Asn-X-Ser/Thr consensus motif in nascent polypeptide chains, the first step in protein N-glycosylation. N-glycosylation occurs cotranslationally and the complex associates with the Sec61 complex at the channel-forming translocon complex that mediates protein translocation across the endoplasmic reticulum (ER). All subunits are required for a maximal enzyme activity. In Malus domestica (Apple), this protein is Dolichyl-diphosphooligosaccharide--protein glycosyltransferase subunit DAD1 (DAD1).